We begin with the raw amino-acid sequence, 122 residues long: Large ribosomal subunit protein uL14 (122 aa).

The protein belongs to the universal ribosomal protein uL14 family. In terms of assembly, part of the 50S ribosomal subunit. Forms a cluster with proteins L3 and L19. In the 70S ribosome, L14 and L19 interact and together make contacts with the 16S rRNA in bridges B5 and B8.

In terms of biological role, binds to 23S rRNA. Forms part of two intersubunit bridges in the 70S ribosome. In Acinetobacter baumannii (strain SDF), this protein is Large ribosomal subunit protein uL14.